Here is a 153-residue protein sequence, read N- to C-terminus: UPF0266 membrane protein SG1324 (153 aa).

Helical transmembrane passes span 6–26, 46–66, and 68–88; these read IGLVIMIVIALLFAVFDEFIV, LDGLIFIVLLLILLYKNITTD, and KVMTSTLILFLGLMVIYLAYI.

The protein belongs to the UPF0266 family.

Its subcellular location is the cell inner membrane. This is UPF0266 membrane protein SG1324 from Sodalis glossinidius (strain morsitans).